A 179-amino-acid chain; its full sequence is Shikimate kinase (179 aa).

14 to 19 (GAGKTT) provides a ligand contact to ATP. T18 provides a ligand contact to Mg(2+). Substrate contacts are provided by D36, R60, and G82. Residue R120 participates in ATP binding. Residue R139 coordinates substrate.

This sequence belongs to the shikimate kinase family. Monomer. Requires Mg(2+) as cofactor.

It localises to the cytoplasm. The catalysed reaction is shikimate + ATP = 3-phosphoshikimate + ADP + H(+). The protein operates within metabolic intermediate biosynthesis; chorismate biosynthesis; chorismate from D-erythrose 4-phosphate and phosphoenolpyruvate: step 5/7. Its function is as follows. Catalyzes the specific phosphorylation of the 3-hydroxyl group of shikimic acid using ATP as a cosubstrate. This Methylococcus capsulatus (strain ATCC 33009 / NCIMB 11132 / Bath) protein is Shikimate kinase.